A 195-amino-acid polypeptide reads, in one-letter code: Probable GTP-binding protein EngB (195 aa).

An EngB-type G domain is found at 22–195 (QLPEIALAGR…WSALSRYIKR (174 aa)). Residues 30 to 37 (GRSNVGKS), 57 to 61 (GKTQT), 75 to 78 (DVPG), 142 to 145 (TKLD), and 174 to 176 (FSA) each bind GTP. Mg(2+) is bound by residues serine 37 and threonine 59.

This sequence belongs to the TRAFAC class TrmE-Era-EngA-EngB-Septin-like GTPase superfamily. EngB GTPase family. The cofactor is Mg(2+).

Its function is as follows. Necessary for normal cell division and for the maintenance of normal septation. This Oceanobacillus iheyensis (strain DSM 14371 / CIP 107618 / JCM 11309 / KCTC 3954 / HTE831) protein is Probable GTP-binding protein EngB.